Reading from the N-terminus, the 505-residue chain is Chemotaxis regulatory protein ChePep (505 aa).

Disordered stretches follow at residues 154 to 403 (EPNN…EDIP) and 420 to 465 (EAVA…SSPL). Composition is skewed to basic and acidic residues over residues 172 to 263 (EEVK…EKTQ), 289 to 311 (ENKE…EVVT), 337 to 346 (QAHELEKQEI), 359 to 373 (QDKE…KEET), and 386 to 398 (PQEK…HYES). The segment covering 440-451 (TETSKNENNTET) has biased composition (low complexity).

As to quaternary structure, interacts with CheZ; the interaction is essential for each other polar localization.

Its subcellular location is the cytoplasm. In terms of biological role, plays an essential role in chemotaxis. Regulates flagellar rotation through the formation of a complex with chemotaxis protein CheZ. Plays a major role in colonization of the stomach. This is Chemotaxis regulatory protein ChePep from Helicobacter pylori (strain ATCC 700392 / 26695) (Campylobacter pylori).